The following is a 232-amino-acid chain: tRNA1(Val) (adenine(37)-N6)-methyltransferase (232 aa).

This sequence belongs to the methyltransferase superfamily. tRNA (adenine-N(6)-)-methyltransferase family.

The protein resides in the cytoplasm. It carries out the reaction adenosine(37) in tRNA1(Val) + S-adenosyl-L-methionine = N(6)-methyladenosine(37) in tRNA1(Val) + S-adenosyl-L-homocysteine + H(+). Its function is as follows. Specifically methylates the adenine in position 37 of tRNA(1)(Val) (anticodon cmo5UAC). The protein is tRNA1(Val) (adenine(37)-N6)-methyltransferase of Haemophilus influenzae (strain PittEE).